The primary structure comprises 292 residues: Elongation factor Ts (292 aa).

The interval 82 to 85 (TDFV) is involved in Mg(2+) ion dislocation from EF-Tu.

This sequence belongs to the EF-Ts family.

The protein resides in the cytoplasm. In terms of biological role, associates with the EF-Tu.GDP complex and induces the exchange of GDP to GTP. It remains bound to the aminoacyl-tRNA.EF-Tu.GTP complex up to the GTP hydrolysis stage on the ribosome. The polypeptide is Elongation factor Ts (Bordetella petrii (strain ATCC BAA-461 / DSM 12804 / CCUG 43448)).